The primary structure comprises 175 residues: Protein FLOWERING LOCUS T (175 aa).

The protein belongs to the phosphatidylethanolamine-binding protein family. Interacts with FD/BZIP14 and FDP/BZIP27. Interacts with FTIP1/MCTP1 in phloem companion cells. Interacts with NAKR1. In terms of tissue distribution, mostly localized in leaves vasculature.

It localises to the cytoplasm. The protein resides in the nucleus. It is found in the endoplasmic reticulum. Component of the mobile flower-promoting signal (floral stimulus or florigen). Promotes the transition from vegetative growth to flowering. Required for 'SEPALLATA3' (SEP3) and 'FRUITFULL' (FUL) accumulation in mature rosette leaves. Seems to acts in parallel with 'LEAFY' to induce flowering by regulating 'APETALA1'. Translated in leaves and then transported to the shoot apical meristem where it activates the transcription of several floral meristem identity genes. May play a role in both the autonomous and the long-day flowering pathways. The protein is Protein FLOWERING LOCUS T of Arabidopsis thaliana (Mouse-ear cress).